Reading from the N-terminus, the 856-residue chain is DNA mismatch repair protein MutS (856 aa).

Residue 618–625 (GPNMGGKS) coordinates ATP.

It belongs to the DNA mismatch repair MutS family.

In terms of biological role, this protein is involved in the repair of mismatches in DNA. It is possible that it carries out the mismatch recognition step. This protein has a weak ATPase activity. The protein is DNA mismatch repair protein MutS of Shewanella baltica (strain OS195).